The following is a 938-amino-acid chain: Protein SEY1 (938 aa).

Positions 1 to 159 are disordered; the sequence is MTSQSHGAPP…QKSAKSTPGS (159 aa). Residues 1-839 are Cytoplasmic-facing; it reads MTSQSHGAPP…KRSTIQSTTQ (839 aa). The span at 33-45 shows a compositional bias: low complexity; that stretch reads SVSSSHSSHSPVT. The span at 74 to 94 shows a compositional bias: pro residues; the sequence is IAAPEPIAAPEPIPAPEPIAA. A compositionally biased stretch (basic and acidic residues) spans 100-118; that stretch reads LKSEHKPVEREHKPVERKP. Residues 146 to 158 are compositionally biased toward polar residues; sequence VPTSQKSAKSTPG. In terms of domain architecture, GB1/RHD3-type G spans 192 to 423; it reads GLDYHVVAVF…DPNYVFKPVY (232 aa). Residue 202-209 coordinates GTP; it reads GSQSTGKS. A coiled-coil region spans residues 603–630; that stretch reads SYDDTLAALEQELDTLRDHKSKVEIDRL. Residues 840–860 traverse the membrane as a helical segment; that stretch reads IPLYMYGLLLLLGWNEIMAVL. Topologically, residues 861–863 are lumenal; it reads RSP. A helical membrane pass occupies residues 864 to 884; sequence VYFMFLLVAAGAAYVIHTLHL. At 885-938 the chain is on the cytoplasmic side; the sequence is WGPLTHMTNTMIAEATDMAKAKLKQVLNEAPTGETREREAPVGSSRDDVELKDL. The tract at residues 911–938 is disordered; sequence LNEAPTGETREREAPVGSSRDDVELKDL. Residues 918 to 938 are compositionally biased toward basic and acidic residues; the sequence is ETREREAPVGSSRDDVELKDL.

Belongs to the TRAFAC class dynamin-like GTPase superfamily. GB1/RHD3 GTPase family. RHD3 subfamily.

The protein localises to the endoplasmic reticulum membrane. In terms of biological role, cooperates with the reticulon proteins and tubule-shaping DP1 family proteins to generate and maintain the structure of the tubular endoplasmic reticulum network. Has GTPase activity, which is required for its function in ER organization. This chain is Protein SEY1, found in Yarrowia lipolytica (strain CLIB 122 / E 150) (Yeast).